Consider the following 295-residue polypeptide: 33 kDa chaperonin (295 aa).

2 cysteine pairs are disulfide-bonded: cysteine 236-cysteine 238 and cysteine 269-cysteine 272.

This sequence belongs to the HSP33 family. Under oxidizing conditions two disulfide bonds are formed involving the reactive cysteines. Under reducing conditions zinc is bound to the reactive cysteines and the protein is inactive.

Its subcellular location is the cytoplasm. In terms of biological role, redox regulated molecular chaperone. Protects both thermally unfolding and oxidatively damaged proteins from irreversible aggregation. Plays an important role in the bacterial defense system toward oxidative stress. In Citrifermentans bemidjiense (strain ATCC BAA-1014 / DSM 16622 / JCM 12645 / Bem) (Geobacter bemidjiensis), this protein is 33 kDa chaperonin.